Here is a 205-residue protein sequence, read N- to C-terminus: Small ribosomal subunit protein uS7 (205 aa).

Belongs to the universal ribosomal protein uS7 family. As to quaternary structure, part of the 30S ribosomal subunit.

One of the primary rRNA binding proteins, it binds directly to 16S rRNA where it nucleates assembly of the head domain of the 30S subunit. Is located at the subunit interface close to the decoding center. This chain is Small ribosomal subunit protein uS7, found in Aeropyrum pernix (strain ATCC 700893 / DSM 11879 / JCM 9820 / NBRC 100138 / K1).